Reading from the N-terminus, the 221-residue chain is UPF0758 protein PC1_4100 (221 aa).

The region spanning 99–221 (AMLNPQATGQ…YVSFAERGWI (123 aa)) is the MPN domain. Residues His170, His172, and Asp183 each contribute to the Zn(2+) site. The JAMM motif signature appears at 170-183 (HNHPSGKAEPSQAD).

This sequence belongs to the UPF0758 family. YicR subfamily.

The polypeptide is UPF0758 protein PC1_4100 (Pectobacterium carotovorum subsp. carotovorum (strain PC1)).